The sequence spans 330 residues: Aquaporin Lacbi1:307192 (330 aa).

The Cytoplasmic segment spans residues 1-40; the sequence is MSATPIIHLRDVKKRTGVLNAWERVRNKPQVHWAMECFAE. A helical membrane pass occupies residues 41-61; it reads ALGVFFYVYFGLGSTAAWVIG. Over 62–71 the chain is Extracellular; sequence NILKQSGLSS. The helical transmembrane segment at 72–92 threads the bilayer; that stretch reads VFQIGFAYAFGILFAIGVCAA. Residues 93 to 124 are Cytoplasmic-facing; that stretch reads TSGGHFNPCVTIAFTIFRGFPPLKAVRYIVAQ. Positions 99–101 match the NPA 1 motif; the sequence is NPC. Residues 125 to 145 traverse the membrane as a helical segment; the sequence is ILGAYIASALVYNQWKVLIVE. At 146–157 the chain is on the extracellular side; the sequence is SELLLKQAGVYE. A helical transmembrane segment spans residues 158–178; it reads TTMFTPNGPAGIFALYLLPGA. Residues 179 to 183 are Cytoplasmic-facing; sequence QTLPR. Residues 184-204 traverse the membrane as a helical segment; that stretch reads AFLNEFVNCFVLALVIWAALD. Topologically, residues 205-207 are extracellular; the sequence is PTS. A helical membrane pass occupies residues 208–228; that stretch reads FMIPPVMAPFIIAAAYAGSIW. Over 229–264 the chain is Cytoplasmic; it reads GYAVPAISLNSARDIGCRLFALTIWGKSAAGGSYSA. The short motif at 238–240 is the NPA 2 element; it reads NSA. Residues 265 to 285 traverse the membrane as a helical segment; the sequence is ITALVNIPATLLAAVVYELFL. Over 286–330 the chain is Extracellular; it reads VDSDRVVAGSHLEFMNVAANHRRHRHQAEDDNHGDADDSSQEKPV. Residues 308–330 form a disordered region; it reads RHRHQAEDDNHGDADDSSQEKPV. The segment covering 312-330 has biased composition (basic and acidic residues); it reads QAEDDNHGDADDSSQEKPV.

The protein belongs to the MIP/aquaporin (TC 1.A.8) family.

Its subcellular location is the membrane. Functionally, water channel-like protein that does not show transport of water nor ammonium across membranes. In Laccaria bicolor (strain S238N-H82 / ATCC MYA-4686) (Bicoloured deceiver), this protein is Aquaporin Lacbi1:307192.